The chain runs to 392 residues: MKKAYYGDFGGQFLPESAMFALNELEGAFLKFSKDKLFKKELNELLKTYVGRPTPLYFARNLSKKYQHEIYLKREDLNHTGAHKINNAIAQALLAKKMGKKKIIAETGAGQHGLATATAAALLGLECEIYMGATDVQRQALNVYKMELLGAKIHAVQSGLKTLKEATTAAIQAWVGDIKNIFYVVGSAVGPYPYPKMVMHFQSIIGKECKMQLQKLNKKVDYIIAAVGGGSNAAGIFYDFIKDENVKLIGIEAGGLGIDTPYHAATLNKGKTGIIHGMKTKVLQDDLGNILPVHSVSAGLDYPGIGPLHAFLFESKRAQYHAISDEECMQALKLLCKEEGIIAAIESSHALAFLEKLCPTLKKKSVIVVNLSGRGDKDMQMIRDYKKGVIYG.

The residue at position 84 (lysine 84) is an N6-(pyridoxal phosphate)lysine.

It belongs to the TrpB family. As to quaternary structure, tetramer of two alpha and two beta chains. Requires pyridoxal 5'-phosphate as cofactor.

It catalyses the reaction (1S,2R)-1-C-(indol-3-yl)glycerol 3-phosphate + L-serine = D-glyceraldehyde 3-phosphate + L-tryptophan + H2O. Its pathway is amino-acid biosynthesis; L-tryptophan biosynthesis; L-tryptophan from chorismate: step 5/5. Functionally, the beta subunit is responsible for the synthesis of L-tryptophan from indole and L-serine. In Campylobacter jejuni subsp. jejuni serotype O:6 (strain 81116 / NCTC 11828), this protein is Tryptophan synthase beta chain.